The primary structure comprises 814 residues: DNA ligase (814 aa).

NAD(+)-binding positions include 46 to 50 (DAEYD), 95 to 96 (SL), and Glu129. Lys131 serves as the catalytic N6-AMP-lysine intermediate. 4 residues coordinate NAD(+): Arg152, Glu189, Lys305, and Lys329. Cys434, Cys437, Cys458, and Cys464 together coordinate Zn(2+). The segment at 526 to 549 (SAQRRTEGEPAPKKPTKKKGEEED) is disordered. The region spanning 735–814 (TSAAAFAGKT…DDWLAMLAEA (80 aa)) is the BRCT domain.

Belongs to the NAD-dependent DNA ligase family. LigA subfamily. Requires Mg(2+) as cofactor. Mn(2+) is required as a cofactor.

It carries out the reaction NAD(+) + (deoxyribonucleotide)n-3'-hydroxyl + 5'-phospho-(deoxyribonucleotide)m = (deoxyribonucleotide)n+m + AMP + beta-nicotinamide D-nucleotide.. DNA ligase that catalyzes the formation of phosphodiester linkages between 5'-phosphoryl and 3'-hydroxyl groups in double-stranded DNA using NAD as a coenzyme and as the energy source for the reaction. It is essential for DNA replication and repair of damaged DNA. The protein is DNA ligase of Methylorubrum extorquens (strain CM4 / NCIMB 13688) (Methylobacterium extorquens).